The following is a 244-amino-acid chain: Krueppel-like factor 9 (244 aa).

2 disordered regions span residues 24-51 and 80-142; these read VPEH…GDPG and SVCS…SEKR. A compositionally biased stretch (basic and acidic residues) spans 32–51; it reads DAERLRLPEREVTKEHGDPG. The residue at position 122 (Ser-122) is a Phosphoserine. 3 C2H2-type zinc fingers span residues 143 to 167, 173 to 197, and 203 to 225; these read HKCP…YRVH, FPCT…YRTH, and FRCP…ARRH.

This sequence belongs to the Sp1 C2H2-type zinc-finger protein family. In terms of assembly, interacts with ZZEF1.

It is found in the nucleus. In terms of biological role, transcription factor that binds to GC box promoter elements. Selectively activates mRNA synthesis from genes containing tandem repeats of GC boxes but represses genes with a single GC box. Acts as an epidermal circadian transcription factor regulating keratinocyte proliferation. The protein is Krueppel-like factor 9 (KLF9) of Sus scrofa (Pig).